The sequence spans 728 residues: Lutropin-choriogonadotropic hormone receptor (728 aa).

Positions 1–19 (MLPALLPLLLPALLPGAGG) are cleaved as a signal peptide. The Extracellular segment spans residues 20 to 389 (GRCPQRCACT…DILGYSFLRV (370 aa)). LRR repeat units lie at residues 92-116 (LPALSEILILNTKNLLHIEDGAFRN), 117-142 (LPRLKYLSICNTGIIEFPDLTQIFSS), 144-166 (AHFILELCDNLRMTTIPQNAFQG), 168-191 (SNESLTLKLYKNGFEDIHSHAFNG), 193-215 (KLNQLILKDNKNLRRIHNDALRG), and 216-239 (ATGPDVLDISSTALESLPSYGLEA). A helical transmembrane segment spans residues 390-410 (LIWFINILALAGNFIVLLVLI). Topologically, residues 411 to 420 (TSHYKLTVPR) are cytoplasmic. The chain crosses the membrane as a helical span at residues 421–441 (FLMCNLSFADFCMGLYLLLIA). Residues 442 to 466 (SVDAQTSGQYYNHAIDWQTGSGCST) are Extracellular-facing. Cysteine 464 and cysteine 539 are joined by a disulfide. Residues 467–487 (AGFFTVFASELSVYTLTVITI) traverse the membrane as a helical segment. Residues 488–507 (ERWHTITYAMQLDRKLRLRH) are Cytoplasmic-facing. Residues 508-528 (AVPIMLGGWVFSILIAVLPLL) traverse the membrane as a helical segment. Topologically, residues 529-551 (GVSSYMKVSICLPMDIETGLSQA) are extracellular. Residues 552–572 (YILLILMLNVIAFLVICACYI) form a helical membrane-spanning segment. The Cytoplasmic segment spans residues 573–595 (KIYVAVQNPELVAANKDTKIAKR). Residues 596-616 (MAILIFTDFTCMAPISFFAIS) traverse the membrane as a helical segment. The Extracellular segment spans residues 617-630 (AAIKVPLITVTNSK). The chain crosses the membrane as a helical span at residues 631–651 (ILLVLFYPVNSCANPFLYAIF). Over 652–728 (TKAFQRDFFL…STKKSQPECQ (77 aa)) the chain is Cytoplasmic.

Belongs to the G-protein coupled receptor 1 family. FSH/LSH/TSH subfamily. As to expression, expressed in ovarian follicle granulosa cells. Expressed in ovarian follicle theca cells.

The protein resides in the cell membrane. In terms of biological role, receptor for lutropin-choriogonadotropic hormone. The activity of this receptor is mediated by G proteins which activate adenylate cyclase. The protein is Lutropin-choriogonadotropic hormone receptor of Gallus gallus (Chicken).